The following is a 158-amino-acid chain: U4/U6.U5 small nuclear ribonucleoprotein 27 kDa protein (158 aa).

The interval 1-102 (MGRSRSRSPE…AEDLEGKTEE (102 aa)) is disordered. The span at 13–59 (RERRRSRSASRERERRRRERSRSRERRRSRSRSPHRRRSRSPRRHRS) shows a compositional bias: basic residues. Basic and acidic residues predominate over residues 66–101 (RLKDRRDDDKKEPKESKGGGSKERQLAAEDLEGKTE).

This sequence belongs to the SNUT3 family. In terms of assembly, part of a tri-snRNP complex.

The protein resides in the nucleus. May play a role in mRNA splicing. This chain is U4/U6.U5 small nuclear ribonucleoprotein 27 kDa protein (snrnp27), found in Xenopus laevis (African clawed frog).